The sequence spans 364 residues: Spermidine/putrescine import ATP-binding protein PotA (364 aa).

The region spanning 5 to 235 (LSFKDVSKGF…PVNRFVADFI (231 aa)) is the ABC transporter domain. 37 to 44 (GPSGCGKT) lines the ATP pocket.

Belongs to the ABC transporter superfamily. Spermidine/putrescine importer (TC 3.A.1.11.1) family. As to quaternary structure, the complex is composed of two ATP-binding proteins (PotA), two transmembrane proteins (PotB and PotC) and a solute-binding protein (PotD).

Its subcellular location is the cell membrane. It carries out the reaction ATP + H2O + polyamine-[polyamine-binding protein]Side 1 = ADP + phosphate + polyamineSide 2 + [polyamine-binding protein]Side 1.. Functionally, part of the ABC transporter complex PotABCD involved in spermidine/putrescine import. Responsible for energy coupling to the transport system. The sequence is that of Spermidine/putrescine import ATP-binding protein PotA from Staphylococcus epidermidis (strain ATCC 12228 / FDA PCI 1200).